The primary structure comprises 337 residues: Fructose-1,6-bisphosphatase class 1 (337 aa).

Residues Glu-91, Asp-113, Leu-115, and Asp-116 each contribute to the Mg(2+) site. Residues 116-119, Asn-209, Tyr-242, and Lys-275 contribute to the substrate site; that span reads DGSS. Glu-281 is a Mg(2+) binding site.

It belongs to the FBPase class 1 family. As to quaternary structure, homotetramer. Mg(2+) is required as a cofactor.

The protein localises to the cytoplasm. The catalysed reaction is beta-D-fructose 1,6-bisphosphate + H2O = beta-D-fructose 6-phosphate + phosphate. Its pathway is carbohydrate biosynthesis; gluconeogenesis. The sequence is that of Fructose-1,6-bisphosphatase class 1 from Nitratidesulfovibrio vulgaris (strain DP4) (Desulfovibrio vulgaris).